The primary structure comprises 476 residues: Ubiquinone biosynthesis monooxygenase COQ6, mitochondrial (476 aa).

The transit peptide at 1–35 (MAARIGSMAGLLCVRWWSSAQLAARGGPLVASQRW) directs the protein to the mitochondrion. An N6-succinyllysine modification is found at K219.

The protein belongs to the UbiH/COQ6 family. In terms of assembly, component of a multi-subunit COQ enzyme complex, composed of at least COQ3, COQ4, COQ5, COQ6, COQ7 and COQ9. Interacts with COQ8B and COQ7. FAD serves as cofactor. Expressed in the kidney, in podocytes.

Its subcellular location is the mitochondrion inner membrane. It is found in the golgi apparatus. The protein localises to the cell projection. The catalysed reaction is 4-hydroxy-3-(all-trans-decaprenyl)benzoate + 2 reduced [2Fe-2S]-[ferredoxin] + O2 + 2 H(+) = 3,4-dihydroxy-5-(all-trans-decaprenyl)benzoate + 2 oxidized [2Fe-2S]-[ferredoxin] + H2O. The enzyme catalyses 2-methoxy-6-(all-trans-decaprenyl)phenol + 2 reduced [2Fe-2S]-[ferredoxin] + O2 + 2 H(+) = 2-methoxy-6-(all-trans-decaprenyl)benzene-1,4-diol + 2 oxidized [2Fe-2S]-[ferredoxin] + H2O. It functions in the pathway cofactor biosynthesis; ubiquinone biosynthesis. Functionally, FAD-dependent monooxygenase required for two non-consecutive steps during ubiquinone biosynthesis. Required for the C5-ring hydroxylation during ubiquinone biosynthesis by catalyzing the hydroxylation of 4-hydroxy-3-(all-trans-decaprenyl)benzoic acid to 3,4-dihydroxy-5-(all-trans-decaprenyl)benzoic acid. Also acts downstream of COQ4, for the C1-hydroxylation during ubiquinone biosynthesis by catalyzing the hydroxylation of 2-methoxy-6-(all-trans-decaprenyl)phenol to 2-methoxy-6-(all-trans-decaprenyl)benzene-1,4-diol. The electrons required for the hydroxylation reaction are funneled indirectly to COQ6 from NADPH via a ferredoxin/ferredoxin reductase system composed of FDX2 and FDXR. This is Ubiquinone biosynthesis monooxygenase COQ6, mitochondrial from Mus musculus (Mouse).